A 159-amino-acid chain; its full sequence is Ribosomal RNA large subunit methyltransferase H (159 aa).

S-adenosyl-L-methionine contacts are provided by residues leucine 76, glycine 108, and 127–132; that span reads FSKMTF.

Belongs to the RNA methyltransferase RlmH family. In terms of assembly, homodimer.

The protein resides in the cytoplasm. The catalysed reaction is pseudouridine(1915) in 23S rRNA + S-adenosyl-L-methionine = N(3)-methylpseudouridine(1915) in 23S rRNA + S-adenosyl-L-homocysteine + H(+). In terms of biological role, specifically methylates the pseudouridine at position 1915 (m3Psi1915) in 23S rRNA. This is Ribosomal RNA large subunit methyltransferase H from Bifidobacterium animalis subsp. lactis (strain AD011).